Here is a 189-residue protein sequence, read N- to C-terminus: Homeobox protein HD-2 (189 aa).

The segment at residues 119-181 is a DNA-binding region (homeobox; TALE-type); the sequence is KPRTRANFPM…NARRRILPFM (63 aa).

This sequence belongs to the TALE/KNOX homeobox family.

It is found in the nucleus. The chain is Homeobox protein HD-2 (HD-2) from Encephalitozoon cuniculi (strain GB-M1) (Microsporidian parasite).